The chain runs to 168 residues: Peptide deformylase 2 (168 aa).

Fe cation contacts are provided by C91 and H133. E134 is a catalytic residue. H137 is a Fe cation binding site.

Belongs to the polypeptide deformylase family. Requires Fe(2+) as cofactor.

The catalysed reaction is N-terminal N-formyl-L-methionyl-[peptide] + H2O = N-terminal L-methionyl-[peptide] + formate. Removes the formyl group from the N-terminal Met of newly synthesized proteins. Requires at least a dipeptide for an efficient rate of reaction. N-terminal L-methionine is a prerequisite for activity but the enzyme has broad specificity at other positions. This Vibrio vulnificus (strain CMCP6) protein is Peptide deformylase 2.